A 478-amino-acid polypeptide reads, in one-letter code: Protein nucleotidyltransferase YdiU (478 aa).

G84, G86, R87, K107, D119, G120, R170, and R177 together coordinate ATP. Residue D246 is the Proton acceptor of the active site. Residues N247 and D256 each contribute to the Mg(2+) site. D256 contributes to the ATP binding site.

It belongs to the SELO family. Mg(2+) serves as cofactor. The cofactor is Mn(2+).

The enzyme catalyses L-seryl-[protein] + ATP = 3-O-(5'-adenylyl)-L-seryl-[protein] + diphosphate. It catalyses the reaction L-threonyl-[protein] + ATP = 3-O-(5'-adenylyl)-L-threonyl-[protein] + diphosphate. It carries out the reaction L-tyrosyl-[protein] + ATP = O-(5'-adenylyl)-L-tyrosyl-[protein] + diphosphate. The catalysed reaction is L-histidyl-[protein] + UTP = N(tele)-(5'-uridylyl)-L-histidyl-[protein] + diphosphate. The enzyme catalyses L-seryl-[protein] + UTP = O-(5'-uridylyl)-L-seryl-[protein] + diphosphate. It catalyses the reaction L-tyrosyl-[protein] + UTP = O-(5'-uridylyl)-L-tyrosyl-[protein] + diphosphate. In terms of biological role, nucleotidyltransferase involved in the post-translational modification of proteins. It can catalyze the addition of adenosine monophosphate (AMP) or uridine monophosphate (UMP) to a protein, resulting in modifications known as AMPylation and UMPylation. This chain is Protein nucleotidyltransferase YdiU, found in Escherichia coli O17:K52:H18 (strain UMN026 / ExPEC).